A 698-amino-acid polypeptide reads, in one-letter code: MNEKKELQQELELQEFQTPKNQQLEKLQEPNGEISSTGNETSESGISSPPISQNDNSNNENESLNITPNKPFVSMQEELQNLDIENIPIPPTIQTPKIYKNTNNLIHSKNNLSLPISLSQENIVKLDKVDIESNDQVNSNTDNNNNTNNNNNTNNNKNEKIGLRSKIFKSKIFIKIRGWWWHRGISTYIMLFYIALNIGVGVHMFYNMYHSDIFKFLGLSFCFSRTAARLINLNSAVILLPVLRNFLSWLRGTIVNNYIPIDKHLNFHKLCAFMLFCCTIIHCVGHYISFKKINDDVLKIDDGKSVAGDYLNININNFPDEKYLFFKSVPGITGHIMLLILILIVSSSMWRIRRPMFEIFWYVHHLFIPFYILLCFHGYSKILKKDPQSWMWIIAPFILYSIERLIRIARSKKRVILEKAIMHPSKVLELRMKRDNDNFNFKPGQYLYLNCPSIAYHEWHPFTITSAPDDPFISVHINIVGNWTRKLFKLLNPDNKLGLIQEDLKSTQNRGKRRILKIDGPFGAPAENFFKYRNLVLIGAGIGVTPFSSILRHLKNQNDKQTNADENHLKINKIYFIWISRQKNSFQWFTDILAELENDERIDSILEIHIFLTGALELDDYAKIKNAQKCHITNLHSKTLFGRPNFRSIFNQLTQLHQREKIGVFYCGNKALGKNIIKNCNKFNGKNNCHLIFHKENF.

Disordered stretches follow at residues 1 to 68 (MNEK…NITP) and 134 to 158 (NDQV…NNKN). The Cytoplasmic segment spans residues 1-184 (MNEKKELQQE…KIRGWWWHRG (184 aa)). Composition is skewed to polar residues over residues 16 to 25 (FQTPKNQQLE) and 33 to 53 (EISS…PISQ). Composition is skewed to low complexity over residues 54-65 (NDNSNNENESLN) and 138-156 (NSNT…TNNN). Residues 185 to 205 (ISTYIMLFYIALNIGVGVHMF) traverse the membrane as a helical segment. Over 206–229 (YNMYHSDIFKFLGLSFCFSRTAAR) the chain is Extracellular. The 151-residue stretch at 225–375 (RTAARLINLN…LFIPFYILLC (151 aa)) folds into the Ferric oxidoreductase domain. The chain crosses the membrane as a helical span at residues 230-250 (LINLNSAVILLPVLRNFLSWL). The Cytoplasmic segment spans residues 251 to 269 (RGTIVNNYIPIDKHLNFHK). Positions 268 and 282 each coordinate heme. The chain crosses the membrane as a helical span at residues 270-290 (LCAFMLFCCTIIHCVGHYISF). Over 291–324 (KKINDDVLKIDDGKSVAGDYLNININNFPDEKYL) the chain is Extracellular. The helical transmembrane segment at 325 to 345 (FFKSVPGITGHIMLLILILIV) threads the bilayer. Topologically, residues 346 to 355 (SSSMWRIRRP) are cytoplasmic. A helical membrane pass occupies residues 356-376 (MFEIFWYVHHLFIPFYILLCF). Heme is bound by residues H364 and H377. Residues 377 to 388 (HGYSKILKKDPQ) are Extracellular-facing. A helical transmembrane segment spans residues 389-409 (SWMWIIAPFILYSIERLIRIA). An FAD-binding FR-type domain is found at 404 to 528 (RLIRIARSKK…DGPFGAPAEN (125 aa)). Residues 410 to 698 (RSKKRVILEK…CHLIFHKENF (289 aa)) are Cytoplasmic-facing. 460-466 (HPFTITS) is a binding site for FAD.

As to quaternary structure, composed of a heavy chain and a light chain. FAD is required as a cofactor.

It is found in the membrane. Functionally, critical component of the membrane-bound oxidase that generates superoxide. It is the terminal component of a respiratory chain that transfers single electrons from cytoplasmic NADPH across the plasma membrane to molecular oxygen on the exterior. The polypeptide is Superoxide-generating NADPH oxidase heavy chain subunit B (noxB) (Dictyostelium discoideum (Social amoeba)).